A 376-amino-acid polypeptide reads, in one-letter code: Putative peptide import ATP-binding protein BMEII0205 (376 aa).

The disordered stretch occupies residues 1 to 25 (MPLRPALHLRTGKLRQTPTHNEPDG). The ABC transporter domain occupies 64–314 (VRTDDLVRDF…PLHPYSRALL (251 aa)). 106-113 (GESGSGKS) contacts ATP.

The protein belongs to the ABC transporter superfamily. The complex is composed of two ATP-binding proteins (BMEII0205 and BMEII0206), two transmembrane proteins (BMEII0207/BMEII0208 and BMEII0209) and a solute-binding protein (BMEII0210).

It localises to the cell inner membrane. Probably part of an ABC transporter complex that could be involved in peptide import. Probably responsible for energy coupling to the transport system. This chain is Putative peptide import ATP-binding protein BMEII0205, found in Brucella melitensis biotype 1 (strain ATCC 23456 / CCUG 17765 / NCTC 10094 / 16M).